The following is a 131-amino-acid chain: MSWQAYVDDHLMCEIEGNHLSAAAIIGQDGSVWAQSANFPQFKSEEITGIMSDFHEPGTLAPTGLYIGGTKYMVIQGEPGAVIRGKKGPGGVTVKKTNQALIIGIYDEPMTPGQCNMIVERLGDYLIDQGY.

An intrachain disulfide couples Cys-13 to Cys-115. The Involved in PIP2 interaction signature appears at 81-97 (AVIRGKKGPGGVTVKKT). Phosphothreonine is present on Thr-111.

It belongs to the profilin family. In terms of assembly, multimer. Occurs in many kinds of cells as a complex with monomeric actin in a 1:1 ratio. Post-translationally, phosphorylated by MAP kinases.

The protein localises to the cytoplasm. The protein resides in the cytoskeleton. Its function is as follows. Binds to actin and affects the structure of the cytoskeleton. At high concentrations, profilin prevents the polymerization of actin, whereas it enhances it at low concentrations. By binding to PIP2, it inhibits the formation of IP3 and DG. This Hevea brasiliensis (Para rubber tree) protein is Profilin-2.